Here is a 551-residue protein sequence, read N- to C-terminus: Tripartite motif-containing protein 5 (551 aa).

At alanine 2 the chain carries N-acetylalanine. An RING-type zinc finger spans residues 15 to 55 (CPICLELLTEPLSLDCGHSFCQACITANHKESRERSCPLCR). Serine 82 bears the Phosphoserine mark. The segment at 87-128 (QKVDRCARHGEKLLLFCQQHGNVICWLCERSEEHRGHRTSLV) adopts a B box-type zinc-finger fold. The Zn(2+) site is built by cysteine 92, histidine 95, cysteine 114, and histidine 120. A coiled-coil region spans residues 127 to 221 (LVEEVAQKYR…VQSENDMVLQ (95 aa)). The required for interaction with GABARAP and for autophagy stretch occupies residues 182 to 195 (FKQLRDILDCEESN). The B30.2/SPRY domain occupies 276 to 551 (PDLKGMLQVF…LPMTLCSPSS (276 aa)).

It belongs to the TRIM/RBCC family. As to quaternary structure, can form homodimers and homotrimers. In addition to lower-order dimerization, also exhibits a higher-order multimerization and both low- and high-order multimerizations are essential for its restriction activity. Interacts with BTBD1 and BTBD2. Interacts with PSMC4, PSMC5, PSMD7 and HSPA8/HSC70. Interacts (via B30.2/SPRY domain) with HSPA1A/B. Interacts with PSMC2, MAP3K7/TAK1, TAB2 and TAB3. Interacts with SQSTM1. Interacts with TRIM6 and TRIM34. Interacts with ULK1 (phosphorylated form), GABARAP, GABARAPL1, GABARAPL2, MAP1LC3A, MAP1LC3C and BECN1. Degraded in a proteasome-independent fashion in the absence of viral infection but in a proteasome-dependent fashion following exposure to restriction sensitive virus. Post-translationally, autoubiquitinated in a RING finger- and UBE2D2-dependent manner. Monoubiquitinated by TRIM21. Deubiquitinated by Yersinia YopJ. Ubiquitination may not lead to proteasomal degradation.

It is found in the cytoplasm. Its subcellular location is the nucleus. The enzyme catalyses S-ubiquitinyl-[E2 ubiquitin-conjugating enzyme]-L-cysteine + [acceptor protein]-L-lysine = [E2 ubiquitin-conjugating enzyme]-L-cysteine + N(6)-ubiquitinyl-[acceptor protein]-L-lysine.. The protein operates within protein modification; protein ubiquitination. In terms of biological role, capsid-specific restriction factor that prevents infection from non-host-adapted retroviruses. Blocks viral replication early in the life cycle, after viral entry but before reverse transcription. In addition to acting as a capsid-specific restriction factor, also acts as a pattern recognition receptor that activates innate immune signaling in response to the retroviral capsid lattice. Binding to the viral capsid triggers its E3 ubiquitin ligase activity, and in concert with the heterodimeric ubiquitin conjugating enzyme complex UBE2V1-UBE2N (also known as UBC13-UEV1A complex) generates 'Lys-63'-linked polyubiquitin chains, which in turn are catalysts in the autophosphorylation of the MAP3K7/TAK1 complex (includes TAK1, TAB2, and TAB3). Activation of the MAP3K7/TAK1 complex by autophosphorylation results in the induction and expression of NF-kappa-B and MAPK-responsive inflammatory genes, thereby leading to an innate immune response in the infected cell. Plays a role in regulating autophagy through activation of autophagy regulator BECN1 by causing its dissociation from its inhibitors BCL2 and TAB2. The sequence is that of Tripartite motif-containing protein 5 (TRIM5) from Alouatta sara (Bolivian red howler monkey).